Reading from the N-terminus, the 637-residue chain is Zinc-transporting ATPase (637 aa).

Transmembrane regions (helical) follow at residues 43-63, 89-109, 258-278, and 286-306; these read GWLL…AFVI, IFAA…ILIF, GVLI…GWSW, and MVFM…PAAL. Residue D337 is the 4-aspartylphosphate intermediate of the active site. Mg(2+) contacts are provided by D535 and D539. The chain crosses the membrane as a helical span at residues 599–619; the sequence is VICLLICANFLQAMELPFGVI.

This sequence belongs to the cation transport ATPase (P-type) (TC 3.A.3) family. Type IB subfamily.

The protein localises to the cell membrane. The enzyme catalyses Zn(2+)(out) + ATP(in) + H2O(in) = Zn(2+)(in) + ADP(in) + phosphate(in) + H(+)(in). Couples the hydrolysis of ATP with the transport of zinc into the cell. Plays an important role in protecting cells against oxidative stress. ZosA-mediated zinc transport is required for post-transcriptional control of comK and competence development. In Bacillus subtilis (strain 168), this protein is Zinc-transporting ATPase (zosA).